The chain runs to 218 residues: Adenylate kinase (218 aa).

10–15 (GAGKGT) contributes to the ATP binding site. The tract at residues 30–59 (STGDMLRAAVKAGTPLGLQAKAVMDSGSLV) is NMP. AMP is bound by residues threonine 31, arginine 36, 57–59 (SLV), 85–88 (GFPR), and glutamine 92. Residues 122-159 (GRRSHPASGRTYHVRFNPPKIDGKDDLTGEALLQREDD) are LID. ATP is bound by residues arginine 123 and 132–133 (TY). Arginine 156 and arginine 167 together coordinate AMP. Glycine 203 is a binding site for ATP.

Belongs to the adenylate kinase family. Monomer.

It localises to the cytoplasm. It catalyses the reaction AMP + ATP = 2 ADP. Its pathway is purine metabolism; AMP biosynthesis via salvage pathway; AMP from ADP: step 1/1. Catalyzes the reversible transfer of the terminal phosphate group between ATP and AMP. Plays an important role in cellular energy homeostasis and in adenine nucleotide metabolism. This chain is Adenylate kinase, found in Verminephrobacter eiseniae (strain EF01-2).